The primary structure comprises 349 residues: MKEVGIVGYGSDLPKYRIKAEDIAGAWGKDAQAIKRGLVVNEKSVPGPDEDTATISVQAARRALSRAGINPKDIGAVYVGSESHPYAVKPTSGIVAEACGVSPDFTAADLEFACKAGTAGMQMCMGLVGSEMMEYAMAVGADTAQGAPGDALEYTAAAGGAAYIIGAKKEEFIAKFNGTYSYTTDTPDFWRREHEHYPKHGGRFTGEPAYFKHVLNGAKGMMAKMDTTAKDYDYCVFHQPNGKFYISAAKQLGFTEEQYKYGLLTPYLGNTYSGAVPLGLSNILDHAKADDRIFVVSYGSGAGSDAFDITVSDRISEVVDKEITTEKLLESKKYVDYAVYLKYRGKIRM.

Residues Asp30 and Ala31 each contribute to the (3S)-3-hydroxy-3-methylglutaryl-CoA site. Glu82 functions as the Proton donor/acceptor in the catalytic mechanism. (3S)-3-hydroxy-3-methylglutaryl-CoA-binding residues include Cys114 and Thr155. The active-site Acyl-thioester intermediate is Cys114. Arg203 serves as a coordination point for CoA. Thr205 and His238 together coordinate (3S)-3-hydroxy-3-methylglutaryl-CoA. His238 serves as the catalytic Proton donor/acceptor. Lys243 lines the CoA pocket. 2 residues coordinate (3S)-3-hydroxy-3-methylglutaryl-CoA: Asn270 and Ser300.

The protein belongs to the thiolase-like superfamily. Archaeal HMG-CoA synthase family. As to quaternary structure, interacts with acetoacetyl-CoA thiolase that catalyzes the precedent step in the pathway and with a DUF35 protein. The acetoacetyl-CoA thiolase/HMG-CoA synthase complex channels the intermediate via a fused CoA-binding site, which allows for efficient coupling of the endergonic thiolase reaction with the exergonic HMGCS reaction.

It carries out the reaction acetoacetyl-CoA + acetyl-CoA + H2O = (3S)-3-hydroxy-3-methylglutaryl-CoA + CoA + H(+). It functions in the pathway metabolic intermediate biosynthesis; (R)-mevalonate biosynthesis; (R)-mevalonate from acetyl-CoA: step 2/3. Its function is as follows. Catalyzes the condensation of acetyl-CoA with acetoacetyl-CoA to form 3-hydroxy-3-methylglutaryl-CoA (HMG-CoA). Functions in the mevalonate (MVA) pathway leading to isopentenyl diphosphate (IPP), a key precursor for the biosynthesis of isoprenoid compounds that are building blocks of archaeal membrane lipids. This chain is Hydroxymethylglutaryl-CoA synthase, found in Methanococcus maripaludis (strain C5 / ATCC BAA-1333).